We begin with the raw amino-acid sequence, 316 residues long: HPr kinase/phosphorylase (316 aa).

Active-site residues include histidine 146 and lysine 167. Residue 161 to 168 (GESGLGKS) coordinates ATP. Serine 168 contributes to the Mg(2+) binding site. The active-site Proton acceptor; for phosphorylation activity. Proton donor; for dephosphorylation activity is aspartate 185. The interval 209–218 (LEVRGIGLLD) is important for the catalytic mechanism of both phosphorylation and dephosphorylation. Glutamate 210 serves as a coordination point for Mg(2+). Arginine 252 is an active-site residue. Residues 273–278 (QVEAGR) are important for the catalytic mechanism of dephosphorylation.

The protein belongs to the HPrK/P family. In terms of assembly, homohexamer. Mg(2+) serves as cofactor.

The catalysed reaction is [HPr protein]-L-serine + ATP = [HPr protein]-O-phospho-L-serine + ADP + H(+). It catalyses the reaction [HPr protein]-O-phospho-L-serine + phosphate + H(+) = [HPr protein]-L-serine + diphosphate. Functionally, catalyzes the ATP- as well as the pyrophosphate-dependent phosphorylation of a specific serine residue in HPr, a phosphocarrier protein of the phosphoenolpyruvate-dependent sugar phosphotransferase system (PTS). HprK/P also catalyzes the pyrophosphate-producing, inorganic phosphate-dependent dephosphorylation (phosphorolysis) of seryl-phosphorylated HPr (P-Ser-HPr). The protein is HPr kinase/phosphorylase of Polaromonas naphthalenivorans (strain CJ2).